Here is a 414-residue protein sequence, read N- to C-terminus: Enolase (414 aa).

Gln-156 is a (2R)-2-phosphoglycerate binding site. The active-site Proton donor is Glu-200. Mg(2+) is bound by residues Asp-236, Glu-281, and Asp-308. Positions 333, 362, 363, and 384 each coordinate (2R)-2-phosphoglycerate. Lys-333 (proton acceptor) is an active-site residue.

Belongs to the enolase family. The cofactor is Mg(2+).

Its subcellular location is the cytoplasm. The protein resides in the secreted. The protein localises to the cell surface. It catalyses the reaction (2R)-2-phosphoglycerate = phosphoenolpyruvate + H2O. It functions in the pathway carbohydrate degradation; glycolysis; pyruvate from D-glyceraldehyde 3-phosphate: step 4/5. Functionally, catalyzes the reversible conversion of 2-phosphoglycerate (2-PG) into phosphoenolpyruvate (PEP). It is essential for the degradation of carbohydrates via glycolysis. The sequence is that of Enolase from Methanosphaera stadtmanae (strain ATCC 43021 / DSM 3091 / JCM 11832 / MCB-3).